The sequence spans 709 residues: Elongation factor G (709 aa).

The 284-residue stretch at Ala9 to Thr292 folds into the tr-type G domain. GTP is bound by residues Ala18–Thr25, Asp89–His93, and Asn143–Asp146.

The protein belongs to the TRAFAC class translation factor GTPase superfamily. Classic translation factor GTPase family. EF-G/EF-2 subfamily.

The protein resides in the cytoplasm. Its function is as follows. Catalyzes the GTP-dependent ribosomal translocation step during translation elongation. During this step, the ribosome changes from the pre-translocational (PRE) to the post-translocational (POST) state as the newly formed A-site-bound peptidyl-tRNA and P-site-bound deacylated tRNA move to the P and E sites, respectively. Catalyzes the coordinated movement of the two tRNA molecules, the mRNA and conformational changes in the ribosome. This chain is Elongation factor G, found in Blochmanniella floridana.